We begin with the raw amino-acid sequence, 486 residues long: Ribosomal RNA small subunit methyltransferase F (486 aa).

S-adenosyl-L-methionine contacts are provided by residues alanine 124–lysine 130, glutamate 148, aspartate 175, and aspartate 193. The active-site Nucleophile is cysteine 246.

This sequence belongs to the class I-like SAM-binding methyltransferase superfamily. RsmB/NOP family.

Its subcellular location is the cytoplasm. It catalyses the reaction cytidine(1407) in 16S rRNA + S-adenosyl-L-methionine = 5-methylcytidine(1407) in 16S rRNA + S-adenosyl-L-homocysteine + H(+). Specifically methylates the cytosine at position 1407 (m5C1407) of 16S rRNA. The sequence is that of Ribosomal RNA small subunit methyltransferase F from Shewanella baltica (strain OS195).